A 156-amino-acid polypeptide reads, in one-letter code: 3-dehydroquinate dehydratase 1 (156 aa).

Tyr-32 (proton acceptor) is an active-site residue. Residues Asn-84, His-90, and Asp-97 each coordinate substrate. Residue His-110 is the Proton donor of the active site. Substrate contacts are provided by residues 111-112 (LS) and Arg-121.

It belongs to the type-II 3-dehydroquinase family. Homododecamer.

It catalyses the reaction 3-dehydroquinate = 3-dehydroshikimate + H2O. It functions in the pathway metabolic intermediate biosynthesis; chorismate biosynthesis; chorismate from D-erythrose 4-phosphate and phosphoenolpyruvate: step 3/7. Catalyzes a trans-dehydration via an enolate intermediate. The sequence is that of 3-dehydroquinate dehydratase 1 (aroQ1) from Ralstonia nicotianae (strain ATCC BAA-1114 / GMI1000) (Ralstonia solanacearum).